Consider the following 83-residue polypeptide: MSGSTGERSFADIITSIRYWVIHSITIPSLFIAGWLFVSTGLAYDVFGSPRPNEYFTESRQGIPLITGRFDPLDQLDEFSRSF.

The chain crosses the membrane as a helical span at residues 21-35 (VIHSITIPSLFIAGW). His-23 lines the heme pocket.

The protein belongs to the PsbE/PsbF family. Heterodimer of an alpha subunit and a beta subunit. PSII is composed of 1 copy each of membrane proteins PsbA, PsbB, PsbC, PsbD, PsbE, PsbF, PsbH, PsbI, PsbJ, PsbK, PsbL, PsbM, PsbT, PsbX, PsbY, PsbZ, Psb30/Ycf12, at least 3 peripheral proteins of the oxygen-evolving complex and a large number of cofactors. It forms dimeric complexes. Heme b serves as cofactor.

It localises to the plastid. Its subcellular location is the chloroplast thylakoid membrane. In terms of biological role, this b-type cytochrome is tightly associated with the reaction center of photosystem II (PSII). PSII is a light-driven water:plastoquinone oxidoreductase that uses light energy to abstract electrons from H(2)O, generating O(2) and a proton gradient subsequently used for ATP formation. It consists of a core antenna complex that captures photons, and an electron transfer chain that converts photonic excitation into a charge separation. This chain is Cytochrome b559 subunit alpha, found in Acorus calamus (Sweet flag).